The chain runs to 2059 residues: MSLSGSQTRLHQISRRSSSRPDLTAVGYSLPRNDGAQFFTSGNGYQSDYNDGYMQTYTQTFSKNSQGGGAGGAQSMSSMAVQKRAQMLYSDCMGFLQRAQGLLETMGPASEVDKNMMAAQDAMDQLRKCAVDMRNAGLPNDMILRSLEDCHSFYADIRNSITGTTIRRTGGTVSGTIGGTISGTIGGTVGGWDDPSKSFQDALSWINQKKRLIETSGFGENSEAISQQILNHNKFHSSIQRSQEVDRARDDLMQSREKAGLHALDQEWDSLQKMSHARMDHLRDLQSIIEEISRAIMWVNDREEEELVFDWGDKNIDNYIPQKQESYSKLMSDLEEKEKELNKLKAKVDMLLKNQHPASDKIEAYMDTLQTQWSWLLQITKCIHVHLKENAAYSQFFKEANETYSRLQKDHENIRKKFGCDKTTPLENLNDMLKNLEKEKEKVIENKRQVQTLVSKSKNIVCLKPRNPEEKSSSPVIVQALCDFKQDQKGIMKGNEGILKDNSQRSKWHVTGPGGLEMLIPSVCLIIPPPNPLSISLANKNEQYYEAIMSIWSQLYINIKSLISWQYCLRDIQHINSLTLSMLTQMRPEEYRQTIKNLEIHYQEFLRNSLGSEMFGDDDKRKMELQYAGAQSHYDQLVIQLPNYRENGVIREVVMVETDSKLKSEVSSGKTATGVSSGKTATGVSSGKTSSSVSVSGLNVSLLSDLSALRRRLETAESGLTKHLHVPLKENSVQECSQRLAQLQAVHRDLDSIRDEYLHLREKIMRELEGSSDPEQSRYLRAELDLINQKLGSLQGFSSAYIQRLGALQALLQHLLQAEDIIKVHEARLTEKETSSLDLNEVEKYCMTLKTMKAELEQKKGVLKAMETELSKAVHWNSQIDQSFHQCDVDLSRYTELVGQMTDRWRRIVTQIDSRTWDLEKQEKQLNHYQQTSSTINRWIQDTRQRQDTLQITKFNSVDNLMDHLNQQKALYSEIKGKKEKVDAVVKDSDTCAASIKDYELQLASYSAGLETLLNIPIKKTMLQSPATVLREEATDLQSRYIELLTRSSDYYKFLGEMLKNMEELKMRNTKIELLEEELRRLKDNLKDQNQKNKSLEDSLTRFRLELTQSKEQLISMEEVKRTQARQCNTAQESLDSTQNQLKSLQDEMSRLTFLIEEEKRKRRLAEERYTNQQEEYELAMRKRQKELEELTLSKSQFERAIKEKEREIERLKLQLQDEASRRSAAELETSKTSMMIQRSDSNYKDIVQERDSLLIKLKLLQQDKDKQQRYEEELRRIKLTLESETKQKQRLQDEIDKITKDFKYWKSQYELKEGQIRQSEMDRDRVERDRASLQSEIQRLTAELRSVEERYRGRLQSSDKEISELMRKKESLEIELRRLQQRPAATWKQTQTDEISKPVVEQKLTVQGLRGEVSLTELVESDLLDQTDLDKINRGQLTSKDIEHKLKSYLGGSDCIAGIYDEAKDRVMPFYQAMKDGLLRRGTTLELLEAQAASGFIIDPVNNVCMTVEEAWKRGLVGKEFKDKLLSAEKAVTGYKDPATGKIISLFQAIEKEIIEKGHGIRLLEAQIASGGIIDPKGSHRIDVEVAYRKGYFDREMNEILSYEGDDTKGFFDPNTHENLTYLELKKRCIKDPKTGLMLLPLNDKQKPKQTTTQKNTLRKRRVVIVDPDTGKEMTVREAYHRELIDYDTFLELSEQECEWEEITIETSDGNKRLLIVDRKTGIQYDIQESLQRGIINKQTLEKYRAGTMTLTEFAALITSKSNSSELAIFSSSPEDVATCSSPTQPSSPTVRKRFASVSITLSPPSDIFDDQSPVGAIFDTETLEKITIPEAQRRGIVDNITAQRLLEAQVCSGGIINPATGQRLSLKDAVQQSLIDEDMSVKLKPAQKAYDGFEDVKTKRKLSAAEAMKEKWLPYEAGQRFLEFQYLTGGLIEPGTGRRVSIEEAIRKGWLDGKGAQKLQDTRNYIKNLTCPKTKLKISYKEAMDNCMVEENNGMKMLQATSMSTKGISSPYNVSSGPSSRSGSRAGSRTGSRSGSRRGSVDYSSSSVSYTFFSSAS.

The segment covering 1–11 (MSLSGSQTRLH) has biased composition (polar residues). Residues 1 to 25 (MSLSGSQTRLHQISRRSSSRPDLTA) form a disordered region. Coiled-coil stretches lie at residues 320 to 354 (IPQK…LLKN) and 397 to 453 (FKEA…VQTL). The segment at 665–690 (EVSSGKTATGVSSGKTATGVSSGKTS) is disordered. The segment covering 671-690 (TATGVSSGKTATGVSSGKTS) has biased composition (low complexity). Coiled coils occupy residues 1062–1229 (MEEL…AELE) and 1261–1383 (LQQD…LQQR). 6 Plectin repeats span residues 1450 to 1488 (YLGG…TLEL), 1489 to 1526 (LEAQ…KDKL), 1564 to 1602 (LLEA…NEIL), 1666 to 1694 (IVDP…FLEL), 1847 to 1885 (LLEA…SVKL), and 1923 to 1961 (FLEF…AQKL). Residues 2008-2059 (KGISSPYNVSSGPSSRSGSRAGSRTGSRSGSRRGSVDYSSSSVSYTFFSSAS) form a disordered region. Positions 2011 to 2059 (SSPYNVSSGPSSRSGSRAGSRTGSRSGSRRGSVDYSSSSVSYTFFSSAS) are enriched in low complexity.

Belongs to the plakin or cytolinker family.

It localises to the cell junction. The protein resides in the desmosome. The protein localises to the cell membrane. Functionally, involved in the organization of desmosome cell-cell junctions. Of particular importance in cell adhesion in the skin and during cardiac development. May also play a role in the regulation of Wnt, TGF-beta and Hippo signaling pathways. The sequence is that of Desmoplakin-A from Danio rerio (Zebrafish).